We begin with the raw amino-acid sequence, 425 residues long: Enolase (425 aa).

Q165 lines the (2R)-2-phosphoglycerate pocket. Catalysis depends on E207, which acts as the Proton donor. 3 residues coordinate Mg(2+): D244, E285, and D312. Positions 337, 366, 367, and 388 each coordinate (2R)-2-phosphoglycerate. The active-site Proton acceptor is the K337.

The protein belongs to the enolase family. Mg(2+) is required as a cofactor.

Its subcellular location is the cytoplasm. It is found in the secreted. The protein resides in the cell surface. It catalyses the reaction (2R)-2-phosphoglycerate = phosphoenolpyruvate + H2O. Its pathway is carbohydrate degradation; glycolysis; pyruvate from D-glyceraldehyde 3-phosphate: step 4/5. Catalyzes the reversible conversion of 2-phosphoglycerate (2-PG) into phosphoenolpyruvate (PEP). It is essential for the degradation of carbohydrates via glycolysis. This Wolbachia sp. subsp. Brugia malayi (strain TRS) protein is Enolase.